The primary structure comprises 474 residues: HTH-type transcriptional regulator RamB (474 aa).

The HTH cro/C1-type domain occupies 10–64 (VRQLRNERGFSQAALAQMLEISPSYLNQIEHDVRPLTVAVLLRITEVFGVDATFF). Positions 21–40 (QAALAQMLEISPSYLNQIEH) form a DNA-binding region, H-T-H motif.

It belongs to the short-chain fatty acyl-CoA assimilation regulator (ScfR) family.

Involved in the control of the glyoxylate cycle. RamB negatively controls the expression of icl expression during growth on acetate as the sole carbon source. The polypeptide is HTH-type transcriptional regulator RamB (Mycobacterium tuberculosis (strain CDC 1551 / Oshkosh)).